We begin with the raw amino-acid sequence, 334 residues long: Holliday junction branch migration complex subunit RuvB (334 aa).

The tract at residues 4 to 184 is large ATPase domain (RuvB-L); the sequence is ADRLIQPQLQ…FGIPLRLEFY (181 aa). Residues R24, G65, K68, T69, T70, 131–133, R174, Y184, and R221 contribute to the ATP site; that span reads EDY. Residue T69 coordinates Mg(2+). The segment at 185 to 255 is small ATPAse domain (RuvB-S); the sequence is NVKDLSTIVT…VAELALNLLD (71 aa). The interval 258 to 334 is head domain (RuvB-H); sequence GEGFDYMDRK…YVHFGMIKPE (77 aa). Positions 294, 313, and 318 each coordinate DNA.

Belongs to the RuvB family. Homohexamer. Forms an RuvA(8)-RuvB(12)-Holliday junction (HJ) complex. HJ DNA is sandwiched between 2 RuvA tetramers; dsDNA enters through RuvA and exits via RuvB. An RuvB hexamer assembles on each DNA strand where it exits the tetramer. Each RuvB hexamer is contacted by two RuvA subunits (via domain III) on 2 adjacent RuvB subunits; this complex drives branch migration. In the full resolvosome a probable DNA-RuvA(4)-RuvB(12)-RuvC(2) complex forms which resolves the HJ.

It is found in the cytoplasm. The catalysed reaction is ATP + H2O = ADP + phosphate + H(+). In terms of biological role, the RuvA-RuvB-RuvC complex processes Holliday junction (HJ) DNA during genetic recombination and DNA repair, while the RuvA-RuvB complex plays an important role in the rescue of blocked DNA replication forks via replication fork reversal (RFR). RuvA specifically binds to HJ cruciform DNA, conferring on it an open structure. The RuvB hexamer acts as an ATP-dependent pump, pulling dsDNA into and through the RuvAB complex. RuvB forms 2 homohexamers on either side of HJ DNA bound by 1 or 2 RuvA tetramers; 4 subunits per hexamer contact DNA at a time. Coordinated motions by a converter formed by DNA-disengaged RuvB subunits stimulates ATP hydrolysis and nucleotide exchange. Immobilization of the converter enables RuvB to convert the ATP-contained energy into a lever motion, pulling 2 nucleotides of DNA out of the RuvA tetramer per ATP hydrolyzed, thus driving DNA branch migration. The RuvB motors rotate together with the DNA substrate, which together with the progressing nucleotide cycle form the mechanistic basis for DNA recombination by continuous HJ branch migration. Branch migration allows RuvC to scan DNA until it finds its consensus sequence, where it cleaves and resolves cruciform DNA. In Shewanella oneidensis (strain ATCC 700550 / JCM 31522 / CIP 106686 / LMG 19005 / NCIMB 14063 / MR-1), this protein is Holliday junction branch migration complex subunit RuvB.